The primary structure comprises 379 residues: Alcohol dehydrogenase 3 (379 aa).

Zn(2+) contacts are provided by cysteine 47, threonine 49, histidine 69, cysteine 99, cysteine 102, cysteine 105, cysteine 113, and cysteine 177. 2 residues coordinate an alcohol: threonine 49 and histidine 69. Threonine 49 contributes to the NAD(+) binding site. NAD(+) is bound by residues 202-207 (GLGAVG), aspartate 226, lysine 231, threonine 272, valine 295, 295-297 (VGV), phenylalanine 322, and arginine 372.

It belongs to the zinc-containing alcohol dehydrogenase family. Homodimer. Requires Zn(2+) as cofactor.

It is found in the cytoplasm. It catalyses the reaction a primary alcohol + NAD(+) = an aldehyde + NADH + H(+). It carries out the reaction a secondary alcohol + NAD(+) = a ketone + NADH + H(+). The chain is Alcohol dehydrogenase 3 (ADH3) from Hordeum vulgare (Barley).